A 599-amino-acid polypeptide reads, in one-letter code: Aspartate--tRNA(Asp/Asn) ligase (599 aa).

E172 is a binding site for L-aspartate. The aspartate stretch occupies residues 196-199; sequence QLFK. R218 contacts L-aspartate. ATP contacts are provided by residues 218–220 and Q227; that span reads RDE. H455 is an L-aspartate binding site. Residue E489 participates in ATP binding. R496 is an L-aspartate binding site. Position 541 to 544 (541 to 544) interacts with ATP; the sequence is GLDR.

Belongs to the class-II aminoacyl-tRNA synthetase family. Type 1 subfamily. As to quaternary structure, homodimer.

It localises to the cytoplasm. It catalyses the reaction tRNA(Asx) + L-aspartate + ATP = L-aspartyl-tRNA(Asx) + AMP + diphosphate. Aspartyl-tRNA synthetase with relaxed tRNA specificity since it is able to aspartylate not only its cognate tRNA(Asp) but also tRNA(Asn). Reaction proceeds in two steps: L-aspartate is first activated by ATP to form Asp-AMP and then transferred to the acceptor end of tRNA(Asp/Asn). This chain is Aspartate--tRNA(Asp/Asn) ligase, found in Herminiimonas arsenicoxydans.